Reading from the N-terminus, the 304-residue chain is Ribosomal RNA small subunit methyltransferase H (304 aa).

S-adenosyl-L-methionine contacts are provided by residues 36–38 (CGH), Asp-55, Phe-81, Asp-102, and Gln-109.

This sequence belongs to the methyltransferase superfamily. RsmH family.

The protein resides in the cytoplasm. The enzyme catalyses cytidine(1402) in 16S rRNA + S-adenosyl-L-methionine = N(4)-methylcytidine(1402) in 16S rRNA + S-adenosyl-L-homocysteine + H(+). Specifically methylates the N4 position of cytidine in position 1402 (C1402) of 16S rRNA. This chain is Ribosomal RNA small subunit methyltransferase H, found in Onion yellows phytoplasma (strain OY-M).